Reading from the N-terminus, the 57-residue chain is Light-harvesting protein B-808/866 alpha chain (57 aa).

Methionine 1 is subject to N-formylmethionine. The Cytoplasmic portion of the chain corresponds to 1-10; sequence MQPRSPVRTN. The chain crosses the membrane as a helical span at residues 11-30; it reads IVIFTILGFVVALLIHFIVL. Residue histidine 26 participates in a bacteriochlorophyll binding. Over 31 to 57 the chain is Periplasmic; the sequence is SSPEYNWLSNAEGGALLLSAARALFGI.

The protein belongs to the antenna complex alpha subunit family. In terms of assembly, the core complex is formed by different alpha and beta chains, binding bacteriochlorophyll molecules, and arranged most probably in tetrameric structures disposed around the reaction center. The non-pigmented gamma chains may constitute additional components.

It is found in the cell membrane. Antenna complexes are light-harvesting systems, which transfer the excitation energy to the reaction centers. The sequence is that of Light-harvesting protein B-808/866 alpha chain (puf2A) from Chloroflexus aurantiacus (strain ATCC 29366 / DSM 635 / J-10-fl).